A 188-amino-acid polypeptide reads, in one-letter code: dCTP deaminase (188 aa).

DCTP contacts are provided by residues Lys111–Arg116, Thr135–Glu137, Gln156, Tyr170, and Gln180. Glu137 serves as the catalytic Proton donor/acceptor.

This sequence belongs to the dCTP deaminase family. Homotrimer.

It carries out the reaction dCTP + H2O + H(+) = dUTP + NH4(+). It participates in pyrimidine metabolism; dUMP biosynthesis; dUMP from dCTP (dUTP route): step 1/2. In terms of biological role, catalyzes the deamination of dCTP to dUTP. This chain is dCTP deaminase, found in Laribacter hongkongensis (strain HLHK9).